Consider the following 268-residue polypeptide: Phosphatidylglycerol--prolipoprotein diacylglyceryl transferase (268 aa).

Transmembrane regions (helical) follow at residues 14 to 34 (LGPI…FAGW), 57 to 77 (LTFY…IIFY), 90 to 110 (FFLW…LIAF), and 117 to 137 (IGAN…IGLG). Arginine 140 is a binding site for a 1,2-diacyl-sn-glycero-3-phospho-(1'-sn-glycerol). 3 consecutive transmembrane segments (helical) span residues 174–194 (QLFE…LVTI), 200–220 (YLVL…CEFF), and 238–258 (GQIL…AVFI).

This sequence belongs to the Lgt family.

It is found in the cell inner membrane. The enzyme catalyses L-cysteinyl-[prolipoprotein] + a 1,2-diacyl-sn-glycero-3-phospho-(1'-sn-glycerol) = an S-1,2-diacyl-sn-glyceryl-L-cysteinyl-[prolipoprotein] + sn-glycerol 1-phosphate + H(+). Its pathway is protein modification; lipoprotein biosynthesis (diacylglyceryl transfer). Its function is as follows. Catalyzes the transfer of the diacylglyceryl group from phosphatidylglycerol to the sulfhydryl group of the N-terminal cysteine of a prolipoprotein, the first step in the formation of mature lipoproteins. The polypeptide is Phosphatidylglycerol--prolipoprotein diacylglyceryl transferase (Francisella tularensis subsp. holarctica (strain FTNF002-00 / FTA)).